We begin with the raw amino-acid sequence, 968 residues long: Polycystin-2 (968 aa).

Polar residues predominate over residues 1-11; that stretch reads MVNSSRVQPQQ. 2 disordered regions span residues 1–28 and 58–181; these read MVNS…DPGR and RIRQ…LPLE. At 1-219 the chain is on the cytoplasmic side; the sequence is MVNSSRVQPQ…STNREKYLKS (219 aa). The span at 62–83 shows a compositional bias: low complexity; it reads AAARDPPAGAAASPSPPLSSCS. Serine 76 and serine 80 each carry phosphoserine. Over residues 95 to 107 the composition is skewed to acidic residues; the sequence is EAEEEEEEVEGEE. The span at 123–139 shows a compositional bias: low complexity; it reads RRSAASSAVSSVGARSR. Omega-N-methylarginine is present on arginine 137. The chain crosses the membrane as a helical span at residues 220-241; sequence VLRELVTYLLFLIVLCILTYGM. At 242–468 the chain is on the extracellular side; sequence MSSNVYYYTR…PLKLIRYVTT (227 aa). Asparagine 299 and asparagine 305 each carry an N-linked (GlcNAc...) asparagine glycan. An N-linked (GlcNAc...) (complex) asparagine glycan is attached at asparagine 328. An intrachain disulfide couples cysteine 331 to cysteine 344. Asparagine 362 and asparagine 375 each carry an N-linked (GlcNAc...) asparagine glycan. A helical transmembrane segment spans residues 469–489; sequence FDFFLAACEIIFCFFIFYYVV. The Cytoplasmic segment spans residues 490-505; that stretch reads EEILEIRIHKLHYFRS. Residues 506–526 traverse the membrane as a helical segment; sequence FWNCLDVVIVVLSVVAIGINI. Residues 527-552 lie on the Extracellular side of the membrane; it reads YRTSNVEVLLQFLEDQNTFPNFEHLA. A helical membrane pass occupies residues 553–573; sequence YWQIQFNNIAAVTVFFVWIKL. Residue glutamine 557 coordinates cholesterol. Residues 574–597 are Cytoplasmic-facing; that stretch reads FKFINFNRTMSQLSTTMSRCAKDL. Residues 598–619 traverse the membrane as a helical segment; the sequence is FGFAIMFFIIFLAYAQLAYLVF. The Extracellular portion of the chain corresponds to 620 to 631; it reads GTQVDDFSTFQE. Positions 632 to 646 form an intramembrane region, pore-forming; that stretch reads CIFTQFRIILGDINF. A Ca(2+)-binding site is contributed by leucine 641. The short motif at 641-643 is the Selectivity filter element; the sequence is LGD. Residues 647 to 654 are Extracellular-facing; the sequence is AEIEEANR. The helical transmembrane segment at 655–675 threads the bilayer; sequence VLGPIYFTTFVFFMFFILLNM. Over 676-968 the chain is Cytoplasmic; the sequence is FLAIINDTYS…GGNGSSNVHV (293 aa). In terms of domain architecture, EF-hand spans 750 to 785; it reads HTDAEIEAIFTKYDQDGDQELTEHEHQQMRDDLEKE. Residues aspartate 763, aspartate 765, aspartate 767, glutamate 769, and glutamate 774 each coordinate Ca(2+). Positions 764-831 are disordered; it reads QDGDQELTEH…HSSRRRGSIS (68 aa). Basic and acidic residues predominate over residues 770–795; sequence LTEHEHQQMRDDLEKEREDLDLDHSS. Residues 796–807 show a composition bias toward low complexity; that stretch reads LPRPMSSRSFPR. Residues serine 801, serine 808, serine 812, and serine 829 each carry the phosphoserine modification. The interval 803-822 is linker; it reads RSFPRSLDDSEEDDDEDSGH. Residues 810 to 821 form an important for interaction with PACS1 and PACS2 region; that stretch reads DDSEEDDDEDSG. A coiled-coil region spans residues 833 to 872; it reads GVSYEEFQVLVRRVDRMEHSIGSIVSKIDAVIVKLEIMER. Residues 917–968 are disordered; that stretch reads ESDDAASQISHGLGTPVGLNGQPRPRSSRPSSSQSTEGMEGAGGNGSSNVHV. The span at 938-951 shows a compositional bias: low complexity; sequence QPRPRSSRPSSSQS.

It belongs to the polycystin family. As to quaternary structure, homotetramer. Component of the heterotetrameric polycystin channel complex with PKD1; the tetramer contains one PKD1 chain and three PKD2 chains. Isoform 1 interacts with PKD1 while isoform 3 does not. Interacts with PKD1L1; probably forms a Ca(2+) channel. Interacts with CD2AP. Interacts with HAX1. Interacts with NEK8. Part of a complex containing AKAP5, ADCY5, ADCY6 and PDE4C. Interacts (via C-terminus) with TRPV4 (via C-terminus). Interacts (via C-terminal acidic region) with PACS1 and PACS2; these interactions retain the protein in the endoplasmic reticulum and prevent trafficking to the cell membrane. Interacts with TMEM33. Form a heterotetramer with TRPC1 with a 2:2 stoichiometry; has distinct channel properties separate from PKD2 or TRPC1 homomers alone. Interacts with TMEM120A; TMEM120A inhibits PKD2 channel activity through the physical association of PKD2 with TMEM120A. Interacts (via N-terminus) with RYR2; regulates RYR2 channel activity. Phosphorylated. Phosphorylation is important for protein function; a mutant that lacks the N-terminal phosphorylation sites cannot complement a zebrafish pkd2-deficient mutant. PKD-mediated phosphorylation at the C-terminus regulates its function in the release of Ca(2+) stores from the endoplasmic reticulum. Phosphorylation at Ser-812 regulates PKD2 trafficking. Phosphorylation at Ser-76 is required for PKD2 trafficking to or retention at the lateral plasma membrane. Phosphorylation at Ser-801, Ser-812 and Ser-829 regulates PKD2 channel activity. Post-translationally, N-glycosylated. The four subunits in a tetramer probably differ in the extent of glycosylation; simultaneous glycosylation of all experimentally validated sites would probably create steric hindrance. Thus, glycosylation at Asn-305 is not compatible with glycosylation at Asn-328; only one of these two residues is glycosylated at a given time. In terms of processing, sumoylated by SUMO1; sumoylation regulates PKD2 membrane recycling and is necessary for intravascular pressure-induced arterial contractility. In terms of tissue distribution, detected in fetal and adult kidney. Detected at the thick ascending limb of the loop of Henle, at distal tubules, including the distal convoluted tubule and cortical collecting tubules, with weak staining of the collecting duct. Detected on placenta syncytiotrophoblasts (at protein level). Strongly expressed in ovary, fetal and adult kidney, testis, and small intestine. Not detected in peripheral leukocytes.

Its subcellular location is the cell projection. It is found in the cilium membrane. The protein resides in the endoplasmic reticulum membrane. The protein localises to the cell membrane. It localises to the basolateral cell membrane. Its subcellular location is the cytoplasmic vesicle membrane. It is found in the golgi apparatus. The protein resides in the vesicle. The protein localises to the secreted. It localises to the extracellular exosome. It carries out the reaction K(+)(in) = K(+)(out). It catalyses the reaction Na(+)(in) = Na(+)(out). The enzyme catalyses Ca(2+)(in) = Ca(2+)(out). Channel activity is regulated by phosphorylation. Channel activity is regulated by intracellular Ca(2+). At the endoplasmic reticulum membrane (ER), TMEM33 enhances its channel activity. TMEM120A inhibits the channel activity of PKD2, and mediates mechanosensitivity of the PKD2-TMEM120A channel complex. PKD1/PKD2 complex on the plasma membrane is activated by PKD1 N-terminus. In terms of biological role, forms a nonselective cation channel. Can function as a homotetrameric ion channel or can form heteromer with PKD1. Displays distinct function depending on its subcellular localization and regulation by its binding partners. In primary cilium functions as a cation channel, with a preference for monovalent cations over divalent cations that allows K(+), Na(+) and Ca(2+) influx, with low selectivity for Ca(2+). Involved in fluid-flow mechanosensation by the primary cilium in renal epithelium. In the endoplasmic reticulum, likely functions as a K(+) channel to facilitate Ca(2+) release. The heterotetrameric PKD1/PKD2 channel has higher Ca(2+) permeability than homomeric PKD2 channel and acts as a primarily Ca(2+)-permeable channel. Interacts with and acts as a regulator of a number of other channels, such as TRPV4, TRPC1, IP3R, RYR2, ultimately further affecting intracellular signaling, to modulate intracellular Ca(2+) signaling. Together with TRPV4, forms mechano- and thermosensitive channels in cilium. In cardiomyocytes, PKD2 modulates Ca(2+) release from stimulated RYR2 receptors through direct association. Also involved in left-right axis specification via its role in sensing nodal flow; forms a complex with PKD1L1 in cilia to facilitate flow detection in left-right patterning. Acts as a regulator of cilium length together with PKD1. Mediates systemic blood pressure and contributes to the myogenic response in cerebral arteries though vasoconstriction. The polypeptide is Polycystin-2 (Homo sapiens (Human)).